The chain runs to 815 residues: uncharacterized protein (815 aa).

A DNA-binding region (zn(2)-C6 fungal-type) is located at residues 31 to 57 (CDMCRRKKIKCDGLRPCKNCKAGKLEC). A helical membrane pass occupies residues 560–580 (YWTTVYCGFSTIVTLIFAALL). Disordered stretches follow at residues 646–668 (ESNVPINNGPQQSIDKESNSNTQ) and 769–792 (DPDVSDGKSRESSSLNNSTPFNPT). Over residues 780 to 792 (SSSLNNSTPFNPT) the composition is skewed to polar residues.

It localises to the cytoplasm. It is found in the nucleus membrane. This is an uncharacterized protein from Schizosaccharomyces pombe (strain 972 / ATCC 24843) (Fission yeast).